The following is a 284-amino-acid chain: MQNKIVKIGNIDVANDKPFVLFGGMNVLESRDMAMQVCEAYVKVTEKLGVPYVFKASFDKANRSSIHSYRGPGMEEGLKIFQELKDTFGVKIITDVHEIYQCQPVADVVDIIQLPAFLARQTDLVEAMAKTGAVINVKKPQFLSPGQMGNIVEKIEECGNDKIILCDRGTNFGYDNLIVDMLGFSVMKKASKGSPVIFDVTHSLQCRDPFGAASSGRRAQVTELARSGLAVGIAGLFLEAHPNPNQAKCDGPSALPLSALEGFVSQMKAIDDLVKSFPELDTSI.

This sequence belongs to the KdsA family.

The protein resides in the cytoplasm. The enzyme catalyses D-arabinose 5-phosphate + phosphoenolpyruvate + H2O = 3-deoxy-alpha-D-manno-2-octulosonate-8-phosphate + phosphate. It functions in the pathway carbohydrate biosynthesis; 3-deoxy-D-manno-octulosonate biosynthesis; 3-deoxy-D-manno-octulosonate from D-ribulose 5-phosphate: step 2/3. Its pathway is bacterial outer membrane biogenesis; lipopolysaccharide biosynthesis. In Haemophilus influenzae (strain 86-028NP), this protein is 2-dehydro-3-deoxyphosphooctonate aldolase.